Consider the following 1847-residue polypeptide: Replication factor C small subunit (1847 aa).

DOD-type homing endonuclease domains are found at residues 179–311 (WLGY…RFGI), 780–927 (MLGL…ISGI), and 1348–1508 (LLGF…EFEV).

Belongs to the activator 1 small subunits family. RfcS subfamily. Heteromultimer composed of small subunits (RfcS) and large subunits (RfcL). Post-translationally, this protein undergoes a protein self splicing that involves a post-translational excision of the intervening region (intein) followed by peptide ligation.

In terms of biological role, part of the RFC clamp loader complex which loads the PCNA sliding clamp onto DNA. The polypeptide is Replication factor C small subunit (rfcS) (Methanocaldococcus jannaschii (strain ATCC 43067 / DSM 2661 / JAL-1 / JCM 10045 / NBRC 100440) (Methanococcus jannaschii)).